A 153-amino-acid chain; its full sequence is Phosphoribosyl-AMP cyclohydrolase (153 aa).

Aspartate 93 provides a ligand contact to Mg(2+). Cysteine 94 serves as a coordination point for Zn(2+). Positions 95 and 97 each coordinate Mg(2+). Zn(2+) contacts are provided by cysteine 112 and cysteine 119.

This sequence belongs to the PRA-CH family. As to quaternary structure, homodimer. The cofactor is Mg(2+). It depends on Zn(2+) as a cofactor.

It localises to the cytoplasm. The enzyme catalyses 1-(5-phospho-beta-D-ribosyl)-5'-AMP + H2O = 1-(5-phospho-beta-D-ribosyl)-5-[(5-phospho-beta-D-ribosylamino)methylideneamino]imidazole-4-carboxamide. It participates in amino-acid biosynthesis; L-histidine biosynthesis; L-histidine from 5-phospho-alpha-D-ribose 1-diphosphate: step 3/9. Catalyzes the hydrolysis of the adenine ring of phosphoribosyl-AMP. The sequence is that of Phosphoribosyl-AMP cyclohydrolase from Mesorhizobium japonicum (strain LMG 29417 / CECT 9101 / MAFF 303099) (Mesorhizobium loti (strain MAFF 303099)).